The following is a 50-amino-acid chain: Toxic protein HokC (50 aa).

The Cytoplasmic segment spans residues 1 to 5 (MKQHK). The chain crosses the membrane as a helical; Signal-anchor for type II membrane protein span at residues 6–24 (AMIVALIVICITAVVAALV). The Periplasmic segment spans residues 25–50 (TRKDLCEVHIRTGQTEVAVFTAYESE).

This sequence belongs to the Hok/Gef family. As to quaternary structure, homodimer; disulfide-linked.

It is found in the cell inner membrane. In terms of biological role, toxic component of a type I toxin-antitoxin (TA) system. When overexpressed kills cells within minutes; causes collapse of the transmembrane potential and arrest of respiration. Its toxic effect is probably neutralized by antisense antitoxin RNA SokC. The protein is Toxic protein HokC of Escherichia coli (strain K12).